We begin with the raw amino-acid sequence, 234 residues long: Probable chemoreceptor glutamine deamidase CheD 1 (234 aa).

The protein belongs to the CheD family.

It carries out the reaction L-glutaminyl-[protein] + H2O = L-glutamyl-[protein] + NH4(+). Probably deamidates glutamine residues to glutamate on methyl-accepting chemotaxis receptors (MCPs), playing an important role in chemotaxis. This chain is Probable chemoreceptor glutamine deamidase CheD 1, found in Albidiferax ferrireducens (strain ATCC BAA-621 / DSM 15236 / T118) (Rhodoferax ferrireducens).